The primary structure comprises 191 residues: Peptidyl-tRNA hydrolase (191 aa).

Tyr17 contacts tRNA. His22 serves as the catalytic Proton acceptor. The tRNA site is built by Tyr68, Asn70, and Asn116.

The protein belongs to the PTH family. In terms of assembly, monomer.

It localises to the cytoplasm. It catalyses the reaction an N-acyl-L-alpha-aminoacyl-tRNA + H2O = an N-acyl-L-amino acid + a tRNA + H(+). Functionally, hydrolyzes ribosome-free peptidyl-tRNAs (with 1 or more amino acids incorporated), which drop off the ribosome during protein synthesis, or as a result of ribosome stalling. In terms of biological role, catalyzes the release of premature peptidyl moieties from peptidyl-tRNA molecules trapped in stalled 50S ribosomal subunits, and thus maintains levels of free tRNAs and 50S ribosomes. The protein is Peptidyl-tRNA hydrolase of Mycobacterium tuberculosis (strain ATCC 25177 / H37Ra).